The sequence spans 243 residues: Small ribosomal subunit protein uS3 (243 aa).

One can recognise a KH type-2 domain in the interval 39–107 (MRKFVMSELK…ETHLNIVEVR (69 aa)). The segment at 214–243 (ASERRAMEGDAQGPASRDRDRDRDRRRDNA) is disordered. The segment covering 229-243 (SRDRDRDRDRRRDNA) has biased composition (basic and acidic residues).

The protein belongs to the universal ribosomal protein uS3 family. As to quaternary structure, part of the 30S ribosomal subunit. Forms a tight complex with proteins S10 and S14.

Its function is as follows. Binds the lower part of the 30S subunit head. Binds mRNA in the 70S ribosome, positioning it for translation. This chain is Small ribosomal subunit protein uS3, found in Rhizobium leguminosarum bv. trifolii (strain WSM2304).